The following is a 304-amino-acid chain: Putative dihydroorotate dehydrogenase A (fumarate) (304 aa).

FMN is bound by residues S22 and 46–47 (KG). Residues K46 and 70 to 74 (NSVGL) contribute to the substrate site. Residues N100 and N128 each contribute to the FMN site. N128 serves as a coordination point for substrate. C131 serves as the catalytic Nucleophile. Residues K166 and V192 each contribute to the FMN site. 193 to 194 (NT) contributes to the substrate binding site. FMN contacts are provided by residues G218, 244-245 (GG), and 266-267 (GT).

The protein belongs to the dihydroorotate dehydrogenase family. Type 1 subfamily. In terms of assembly, homodimer. The cofactor is FMN.

Its subcellular location is the cytoplasm. The catalysed reaction is (S)-dihydroorotate + fumarate = orotate + succinate. Its pathway is pyrimidine metabolism; UMP biosynthesis via de novo pathway. Its function is as follows. Catalyzes the conversion of dihydroorotate to orotate with fumarate as the electron acceptor. This is Putative dihydroorotate dehydrogenase A (fumarate) (pyrD) from Solibacter usitatus (strain Ellin6076).